The primary structure comprises 320 residues: Aspartate carbamoyltransferase catalytic subunit (320 aa).

Residues R68 and T69 each contribute to the carbamoyl phosphate site. An L-aspartate-binding site is contributed by K96. Residues R118, H148, and Q151 each coordinate carbamoyl phosphate. Positions 181 and 236 each coordinate L-aspartate. Carbamoyl phosphate-binding residues include G277 and P278.

The protein belongs to the aspartate/ornithine carbamoyltransferase superfamily. ATCase family. As to quaternary structure, heterododecamer (2C3:3R2) of six catalytic PyrB chains organized as two trimers (C3), and six regulatory PyrI chains organized as three dimers (R2).

It catalyses the reaction carbamoyl phosphate + L-aspartate = N-carbamoyl-L-aspartate + phosphate + H(+). It functions in the pathway pyrimidine metabolism; UMP biosynthesis via de novo pathway; (S)-dihydroorotate from bicarbonate: step 2/3. Catalyzes the condensation of carbamoyl phosphate and aspartate to form carbamoyl aspartate and inorganic phosphate, the committed step in the de novo pyrimidine nucleotide biosynthesis pathway. The polypeptide is Aspartate carbamoyltransferase catalytic subunit (Paracidovorax citrulli (strain AAC00-1) (Acidovorax citrulli)).